The following is a 380-amino-acid chain: L-lactate dehydrogenase (380 aa).

An FMN hydroxy acid dehydrogenase domain is found at Met1 to Ala380. Substrate is bound at residue Tyr24. FMN contacts are provided by Ser106 and Gln127. A substrate-binding site is contributed by Tyr129. FMN is bound at residue Thr155. Arg164 is a binding site for substrate. Lys251 serves as a coordination point for FMN. Residue His275 is the Proton acceptor of the active site. Arg278 provides a ligand contact to substrate. Asp306–Arg330 is an FMN binding site.

It belongs to the FMN-dependent alpha-hydroxy acid dehydrogenase family. In terms of assembly, homotetramer. Requires FMN as cofactor.

It localises to the cell inner membrane. The catalysed reaction is (S)-lactate + A = pyruvate + AH2. Its function is as follows. Catalyzes the conversion of L-lactate to pyruvate. Is coupled to the respiratory chain. The sequence is that of L-lactate dehydrogenase from Pseudomonas syringae pv. syringae (strain B728a).